A 535-amino-acid polypeptide reads, in one-letter code: Pescadillo homolog (535 aa).

Residues 314 to 406 form the BRCT domain; the sequence is KRKQLFANYR…SCLSIKKYLP (93 aa).

This sequence belongs to the pescadillo family.

Its subcellular location is the nucleus. It is found in the nucleolus. The protein localises to the nucleoplasm. Required for maturation of ribosomal RNAs and formation of the large ribosomal subunit. This Brugia malayi (Filarial nematode worm) protein is Pescadillo homolog.